The primary structure comprises 588 residues: Complement component C8 beta chain (588 aa).

The N-terminal stretch at 1-30 (MFRVAIPRSALNLHSCLLHVTLSLVLISKA) is a signal peptide. The propeptide occupies 31–46 (AITTAGNEDSDVREAR). In terms of domain architecture, TSP type-1 1 spans 58-113 (DCVISDWSAWSRCDTCQKKRYRYAKLDQPSQFGGEPCHFHDMEDEACDVPDRYTCD). 7 cysteine pairs are disulfide-bonded: C59–C94, C70–C104, C73–C112, C118–C129, C123–C142, C136–C151, and C158–C196. C-linked (Man) tryptophan glycosylation is found at W64 and W67. Positions 115–152 (IPLCEGFLCTQTGRCIHRTLQCNGEDDCGDMSDEVGCK) constitute an LDL-receptor class A domain. L134, N137, E139, D141, D147, and E148 together coordinate Ca(2+). An MACPF domain is found at 154-500 (VPKPCRQEAE…EYLAESSSCR (347 aa)). The next 4 beta stranded transmembrane spans lie at 248 to 255 (TIVSIGFA), 258 to 265 (GIAEFGFN), 375 to 382 (TQAGLKIG), and 388 to 395 (VYVSAGIE). Intrachain disulfides connect C374–C399, C499–C547, C501–C517, C504–C519, and C521–C530. Positions 501–531 (CAPCHNNGVAVLRGTRCDCVCPTGYTGRGCE) constitute an EGF-like domain. The 47-residue stretch at 542–588 (DGSWSCWGAWSSCSGRKMSRSRQCNNPVPSDGGLACRGLQQESTDCF) folds into the TSP type-1 2 domain. W548 and W551 each carry a C-linked (Man) tryptophan glycan. C554 and C587 are joined by a disulfide.

The protein belongs to the complement C6/C7/C8/C9 family. Heterotrimer of 3 chains: alpha (C8A), beta (C8B) and gamma (C8G); the alpha and gamma chains are disulfide bonded. Component of the membrane attack complex (MAC), composed of complement C5b, C6, C7, C8A, C8B, C8G and multiple copies of the pore-forming subunit C9.

Its subcellular location is the secreted. It is found in the target cell membrane. In terms of biological role, component of the membrane attack complex (MAC), a multiprotein complex activated by the complement cascade, which inserts into a target cell membrane and forms a pore, leading to target cell membrane rupture and cell lysis. The MAC is initiated by proteolytic cleavage of C5 into complement C5b in response to the classical, alternative, lectin and GZMK complement pathways. The complement pathways consist in a cascade of proteins that leads to phagocytosis and breakdown of pathogens and signaling that strengthens the adaptive immune system. C8B, together with C8A and C8G, inserts into the target membrane, but does not form pores by itself. During MAC assembly, associates with C5b, C6 and C7 to form the C5b8 intermediate complex that inserts into the target membrane and traverses the bilayer increasing membrane rigidity. This chain is Complement component C8 beta chain (c8b), found in Paralichthys olivaceus (Bastard halibut).